An 827-amino-acid chain; its full sequence is Lon protease 2 (827 aa).

Residues 1–22 (MSDEKKKGSAASAMPTAMAPPG) are disordered. The span at 9–21 (SAASAMPTAMAPP) shows a compositional bias: low complexity. Residues 33 to 227 (LPILPLRNSV…LVLELLNRKR (195 aa)) enclose the Lon N-terminal domain. An ATP-binding site is contributed by 379-386 (GPPGVGKT). A Lon proteolytic domain is found at 615 to 796 (TEVPGVATGL…DDVLKAALET (182 aa)). Residues serine 702 and lysine 745 contribute to the active site. The tract at residues 799–827 (VGVAGTPGGEPGKEAPLPKPAESAPEVRA) is disordered.

This sequence belongs to the peptidase S16 family. Homohexamer. Organized in a ring with a central cavity.

The protein localises to the cytoplasm. It carries out the reaction Hydrolysis of proteins in presence of ATP.. Functionally, ATP-dependent serine protease that mediates the selective degradation of mutant and abnormal proteins as well as certain short-lived regulatory proteins. Required for cellular homeostasis and for survival from DNA damage and developmental changes induced by stress. Degrades polypeptides processively to yield small peptide fragments that are 5 to 10 amino acids long. Binds to DNA in a double-stranded, site-specific manner. The polypeptide is Lon protease 2 (Myxococcus xanthus).